Reading from the N-terminus, the 607-residue chain is Bifunctional lysine-specific demethylase and histidyl-hydroxylase NO66 (607 aa).

Disordered regions lie at residues 23-121 (GPTI…IKTN) and 139-184 (ATQH…GEVE). The segment covering 25 to 37 (TIQQTGATKTPKT) has biased composition (polar residues). Residues 39–58 (SKIRRLSIRKSTRKIKHALK) are compositionally biased toward basic residues. Residues 156–167 (DKTPVKRVRSDT) are compositionally biased toward basic and acidic residues. Positions 188–405 (EEAEKMFEWL…DLMEKLVPAA (218 aa)) constitute a JmjC domain. The Fe cation site is built by His-328, Asp-330, and His-371.

Belongs to the ROX family. NO66 subfamily. It depends on Fe(2+) as a cofactor.

The protein resides in the nucleus. It catalyses the reaction L-histidyl-[protein] + 2-oxoglutarate + O2 = (3S)-3-hydroxy-L-histidyl-[protein] + succinate + CO2. It carries out the reaction N(6),N(6)-dimethyl-L-lysyl(36)-[histone H3] + 2 2-oxoglutarate + 2 O2 = L-lysyl(36)-[histone H3] + 2 formaldehyde + 2 succinate + 2 CO2. In terms of biological role, oxygenase that can act as both a histone lysine demethylase and a ribosomal histidine hydroxylase. Specifically demethylates 'Lys-4' (H3K4me) and 'Lys-36' (H3K36me) of histone H3, thereby playing a central role in histone code. Also catalyzes the hydroxylation of 60S ribosomal protein L8. The protein is Bifunctional lysine-specific demethylase and histidyl-hydroxylase NO66 of Branchiostoma floridae (Florida lancelet).